The sequence spans 337 residues: MATRAMEELDGGLGSCQVDEDLSALADPCPSRPQEDSVRATSRLADSSSRSHDSQERVTEGSPTGSVDTKPKKMEKEPVSKVTSGAGKEKLKAGATPRSPARKKAQTASPTQPPPPPALSDELPWGDLTLNKCLVLASLVALLGSAFQLCREAVARDVEAPAPVPESWASSSSSPKGPASTLPKPEAWAPSVRQPEPPSKLEERVQIPRSEEAAEKDEWESEEAADGEHVPLAGRGPKEKLKKEKPRKERPGKEKPQKEERPRKEKPRKEEKPRGAREPQGALPRRWEAREGGHRPWGRDSGAPEDRKRQAWVSLRRPDEEDRPLGRQKRRAGKGRD.

Residues Met-1 to Ser-84 are mediates interaction with CACNA1S. Disordered regions lie at residues Ser-23–Trp-125 and Glu-159–Asp-337. Basic and acidic residues-rich tracts occupy residues Ser-49–Thr-59 and Thr-69–Val-79. Residues Pro-165 to Ser-180 show a composition bias toward low complexity. Residues Ser-199 to Ala-213 are compositionally biased toward basic and acidic residues. Residues Ala-214–Ala-225 are compositionally biased toward acidic residues. Composition is skewed to basic and acidic residues over residues Gly-236 to Arg-277, Arg-285 to Arg-309, and Arg-316 to Leu-325. The segment covering Gly-326–Asp-337 has biased composition (basic residues).

Interacts with CACNA1S, CACNB1 and calsequestrin.

The protein localises to the sarcoplasmic reticulum membrane. Its subcellular location is the endoplasmic reticulum membrane. Its function is as follows. Involved in skeletal muscle excitation/contraction coupling (EC), probably acting as a regulator of the voltage-sensitive calcium channel CACNA1S. EC is a physiological process whereby an electrical signal (depolarization of the plasma membrane) is converted into a chemical signal, a calcium gradient, by the opening of ryanodine receptor calcium release channels. May regulate CACNA1S membrane targeting and activity. The polypeptide is Junctional sarcoplasmic reticulum protein 1 (JSRP1) (Bos taurus (Bovine)).